A 406-amino-acid chain; its full sequence is Phosphopentomutase (406 aa).

Positions 10, 305, 310, 346, 347, and 358 each coordinate Mn(2+).

Belongs to the phosphopentomutase family. Mn(2+) serves as cofactor.

It is found in the cytoplasm. The enzyme catalyses 2-deoxy-alpha-D-ribose 1-phosphate = 2-deoxy-D-ribose 5-phosphate. It carries out the reaction alpha-D-ribose 1-phosphate = D-ribose 5-phosphate. It functions in the pathway carbohydrate degradation; 2-deoxy-D-ribose 1-phosphate degradation; D-glyceraldehyde 3-phosphate and acetaldehyde from 2-deoxy-alpha-D-ribose 1-phosphate: step 1/2. Functionally, isomerase that catalyzes the conversion of deoxy-ribose 1-phosphate (dRib-1-P) and ribose 1-phosphate (Rib-1-P) to deoxy-ribose 5-phosphate (dRib-5-P) and ribose 5-phosphate (Rib-5-P), respectively. This chain is Phosphopentomutase, found in Photobacterium profundum (strain SS9).